Consider the following 739-residue polypeptide: Polyribonucleotide nucleotidyltransferase (739 aa).

Asp-514 and Asp-520 together coordinate Mg(2+). A KH domain is found at 580 to 639; it reads PRIITVKIPVDKIGEVIGPKGKMINQIQEDTGADITIEDDGTIYIGAAQGSQAEAARATI. The S1 motif domain maps to 651 to 723; that stretch reads GERYLGTVVK…SRGKLSLIPV (73 aa).

The protein belongs to the polyribonucleotide nucleotidyltransferase family. It depends on Mg(2+) as a cofactor.

It localises to the cytoplasm. The catalysed reaction is RNA(n+1) + phosphate = RNA(n) + a ribonucleoside 5'-diphosphate. Involved in mRNA degradation. Catalyzes the phosphorolysis of single-stranded polyribonucleotides processively in the 3'- to 5'-direction. The sequence is that of Polyribonucleotide nucleotidyltransferase from Streptomyces coelicolor (strain ATCC BAA-471 / A3(2) / M145).